The following is a 425-amino-acid chain: Histidine--tRNA ligase (425 aa).

The protein belongs to the class-II aminoacyl-tRNA synthetase family. In terms of assembly, homodimer.

The protein localises to the cytoplasm. It catalyses the reaction tRNA(His) + L-histidine + ATP = L-histidyl-tRNA(His) + AMP + diphosphate + H(+). The polypeptide is Histidine--tRNA ligase (Shewanella sp. (strain MR-4)).